We begin with the raw amino-acid sequence, 335 residues long: MKTILAVETSCDETAVAIVNSDKQVLAHEILSQAEHKKRGGVIPEIASRAHMEHLSGLIKSAVEKSNLNFCDLNAIAATSGPGLIGGLIVGTMMAKAIAHVAQKPFIAVNHLEAHALVIRLLHEVKFPFLVLLISGGHCQFLIAQDVGKYIKLGETLDDSLGEAFDKVAKMLGLSYPGGPLIEKLAKKGNGTRFKLPRAMIKRSGCNFSFSGIKTAVKNLVQELKMSEQDVCDVCASFQECISDILLDRVSNAIIMAESLNIKINDFVITGGVAANNFLREKLKQHINLNIFFPPNDLCTDNAIMVGWTGIERLQKNYIDPLNFAPRPKWELESY.

The Fe cation site is built by His111 and His115. Substrate contacts are provided by residues 133 to 137, Asp166, Gly179, and Asn276; that span reads LISGG. Asp301 is a binding site for Fe cation.

Belongs to the KAE1 / TsaD family. It depends on Fe(2+) as a cofactor.

Its subcellular location is the cytoplasm. It catalyses the reaction L-threonylcarbamoyladenylate + adenosine(37) in tRNA = N(6)-L-threonylcarbamoyladenosine(37) in tRNA + AMP + H(+). Required for the formation of a threonylcarbamoyl group on adenosine at position 37 (t(6)A37) in tRNAs that read codons beginning with adenine. Is involved in the transfer of the threonylcarbamoyl moiety of threonylcarbamoyl-AMP (TC-AMP) to the N6 group of A37, together with TsaE and TsaB. TsaD likely plays a direct catalytic role in this reaction. This is tRNA N6-adenosine threonylcarbamoyltransferase from Wolbachia pipientis wMel.